The following is a 929-amino-acid chain: Formin-like protein 11 (929 aa).

The signal sequence occupies residues 1-28 (MMRHCRREWLLALCLISVQLLIPTGCEG). A disordered region spans residues 153–215 (ESSTTKSIPE…KSVAEKKKDS (63 aa)). The segment covering 171 to 189 (KTSTPKPVNKPTDSVSSPP) has biased composition (polar residues). The span at 191 to 215 (RSYKSAPTEKENPPTKSVAEKKKDS) shows a compositional bias: basic and acidic residues. The helical transmembrane segment at 222–242 (FIGLSIAGIALMAHLCLCCFM) threads the bilayer. 2 disordered regions span residues 372 to 472 (PVGS…ENSN) and 726 to 749 (AAKE…SEQT). Residues 382–447 (MQPPVMPPPI…GPPRPPPPAM (66 aa)) show a composition bias toward pro residues. The FH2 domain maps to 468–898 (VENSNEAKTK…KAKAKQPSQS (431 aa)). A compositionally biased stretch (basic and acidic residues) spans 738-749 (KTDDLGDKSEQT).

This sequence belongs to the formin-like family. Class-I subfamily.

It localises to the membrane. This is Formin-like protein 11 (FH11) from Oryza sativa subsp. japonica (Rice).